Reading from the N-terminus, the 393-residue chain is NAD(P)H-quinone oxidoreductase subunit H, chloroplastic (393 aa).

It belongs to the complex I 49 kDa subunit family. NDH is composed of at least 16 different subunits, 5 of which are encoded in the nucleus.

Its subcellular location is the plastid. The protein resides in the chloroplast thylakoid membrane. It carries out the reaction a plastoquinone + NADH + (n+1) H(+)(in) = a plastoquinol + NAD(+) + n H(+)(out). The enzyme catalyses a plastoquinone + NADPH + (n+1) H(+)(in) = a plastoquinol + NADP(+) + n H(+)(out). Functionally, NDH shuttles electrons from NAD(P)H:plastoquinone, via FMN and iron-sulfur (Fe-S) centers, to quinones in the photosynthetic chain and possibly in a chloroplast respiratory chain. The immediate electron acceptor for the enzyme in this species is believed to be plastoquinone. Couples the redox reaction to proton translocation, and thus conserves the redox energy in a proton gradient. The protein is NAD(P)H-quinone oxidoreductase subunit H, chloroplastic of Eucalyptus globulus subsp. globulus (Tasmanian blue gum).